Reading from the N-terminus, the 1522-residue chain is Paired amphipathic helix protein pst1 (1522 aa).

Residues 139–174 (TILSSTDSNIPRPGTVKSSASPFVPNQNPSAPPPPP) are disordered. Positions 178–248 (RQLNVTDALS…QGFNTFLPPG (71 aa)) constitute a PAH 1 domain. The segment at 307 to 339 (QSSASHPVLQPPAPSTLQFNPSPSPAAPSYPPV) is disordered. Over residues 328–337 (SPSPAAPSYP) the composition is skewed to pro residues. One can recognise a PAH 2 domain in the interval 345 to 415 (QAADLDQAIN…EEFKRFLPDV (71 aa)). Disordered stretches follow at residues 422-504 (ETQD…AFNV), 928-968 (AREN…DESS), and 1343-1522 (SGKA…KDDL). The span at 426–441 (KSTVVPQESATATPKR) shows a compositional bias: polar residues. A Phosphoserine modification is found at S442. Residues 442–468 (SPSATPTSALPPIGKFAPPTTAKAQPA) show a composition bias toward low complexity. At T446 the chain carries Phosphothreonine. Positions 504-576 (VPIAQNKNPS…NWLKDLVKYN (73 aa)) constitute a PAH 3 domain. Residues 928 to 960 (ARENRSSVKEDYVSESTERTPDASEIDEHISEH) are compositionally biased toward basic and acidic residues. The segment covering 1385 to 1398 (GKSSVTRGNKTNLK) has biased composition (polar residues). Basic and acidic residues predominate over residues 1403-1432 (RNNDDSSNKINLSEKEKEKESIEDEEKNRE). Phosphoserine is present on S1443. Residues 1461 to 1474 (TSSHRPERSSEKKS) show a composition bias toward basic and acidic residues. Polar residues predominate over residues 1478–1487 (VFTSVKQTAE). Positions 1488–1522 (NDADNEDDKTDMDDQTEETLDADNTMEEEPSKDDL) are enriched in acidic residues.

The protein localises to the nucleus. Functionally, has a role in modulating the nuclear import of TF1 virus-like particles. Essential for viability. In Schizosaccharomyces pombe (strain 972 / ATCC 24843) (Fission yeast), this protein is Paired amphipathic helix protein pst1 (pst1).